Consider the following 136-residue polypeptide: NADPH-dependent 7-cyano-7-deazaguanine reductase (136 aa).

Cysteine 50 (thioimide intermediate) is an active-site residue. Catalysis depends on aspartate 57, which acts as the Proton donor. Substrate contacts are provided by residues 72–74 (YEL) and 91–92 (HE).

Belongs to the GTP cyclohydrolase I family. QueF type 1 subfamily.

Its subcellular location is the cytoplasm. The catalysed reaction is 7-aminomethyl-7-carbaguanine + 2 NADP(+) = 7-cyano-7-deazaguanine + 2 NADPH + 3 H(+). It functions in the pathway tRNA modification; tRNA-queuosine biosynthesis. In terms of biological role, catalyzes the NADPH-dependent reduction of 7-cyano-7-deazaguanine (preQ0) to 7-aminomethyl-7-deazaguanine (preQ1). The sequence is that of NADPH-dependent 7-cyano-7-deazaguanine reductase from Prochlorococcus marinus (strain MIT 9301).